We begin with the raw amino-acid sequence, 612 residues long: Cytoplasmic dynein 1 intermediate chain 2 (612 aa).

Basic and acidic residues-rich tracts occupy residues Met1 to Arg13 and Gln20 to Ala43. Positions Met1–Gln188 are disordered. Ser2 carries the post-translational modification N-acetylserine. A Diphosphoserine modification is found at Ser51. Residues Ser51 and Ser84 each carry the phosphoserine modification. Low complexity predominate over residues Pro82–Ser91. Position 89 is a phosphothreonine (Thr89). Residues Ser91, Ser95, and Ser98 each carry the phosphoserine modification. Residues Glu164–Gln188 show a composition bias toward basic and acidic residues. 7 WD repeats span residues Ser251–Glu300, His304–Val344, Ala353–Asp394, Ser403–Ser443, Gly448–Ser493, Asp496–Thr536, and Glu542–Arg581.

Belongs to the dynein intermediate chain family. Homodimer. The cytoplasmic dynein 1 complex consists of two catalytic heavy chains (HCs) and a number of non-catalytic subunits presented by intermediate chains (ICs), light intermediate chains (LICs) and light chains (LCs); the composition seems to vary in respect to the IC, LIC and LC composition. The heavy chain homodimer serves as a scaffold for the probable homodimeric assembly of the respective non-catalytic subunits. The ICs and LICs bind directly to the HC dimer and the LCs assemble on the IC dimer. Interacts with DYNLT3. Interacts with DYNLT1. Interacts (dephosphorylated at Ser-84) with DCTN1. Interacts with BICD2. Interacts with SPEF2. Interacts with CFAP61. The phosphorylation status of Ser-84 appears to be involved in dynactin-dependent target binding. In terms of processing, pyrophosphorylation by 5-diphosphoinositol pentakisphosphate (5-IP7) promotes interaction with DCTN1. Serine pyrophosphorylation is achieved by Mg(2+)-dependent, but enzyme independent transfer of a beta-phosphate from a inositol pyrophosphate to a pre-phosphorylated serine residue.

The protein resides in the cytoplasm. The protein localises to the cytoskeleton. In terms of biological role, acts as one of several non-catalytic accessory components of the cytoplasmic dynein 1 complex that are thought to be involved in linking dynein to cargos and to adapter proteins that regulate dynein function. Cytoplasmic dynein 1 acts as a motor for the intracellular retrograde motility of vesicles and organelles along microtubules. The intermediate chains mediate the binding of dynein to dynactin via its 150 kDa component (p150-glued) DCTN1. Involved in membrane-transport, such as Golgi apparatus, late endosomes and lysosomes. This chain is Cytoplasmic dynein 1 intermediate chain 2 (Dync1i2), found in Mus musculus (Mouse).